A 487-amino-acid polypeptide reads, in one-letter code: MDLDEAFLYVGEFGWCQKRLTGFLTLLQIYVACQSMLIVLVGAVPEYLIDNEDISTSKEDYIKHLHDANNFTSIVSEWHLIKHEAYKVNLASSLFFAGLLIGNVFFGPLSDKLGRRPVYLSGLFFDIIFGYFTALAPSYEVFAVSRFFVGVMNGGMALVSFVLTQEYVGKSYWALTGSLTNLIFAVGIAFYALLGFYIRNWRTLAFVANSPGIFFLLLSFVLPESPRWLYSRGYTAEAEAVLESMAAGNGVERPVVRLKSCPGTTANSAHSVFDLVKYGVLRWRTILLMYIWYVCSLVYYGLTLNAGELKGNLYLNVALYGLVEVPAFPLCLYFIEKSWSGRRRATAGFLVFAGFACIFTIFVPETNGDFINPTVLALFGKLSVSAAFNVVYIYTSELYPTVVRNAGLGVCAMACRFGGILSPFIPAMKSFNPSMPFVAFGISGISAGILSLLLPETRNKPIAETIEDLQSPAYQLLSRGNEVLAST.

Residues 23–43 form a helical membrane-spanning segment; it reads FLTLLQIYVACQSMLIVLVGA. N-linked (GlcNAc...) asparagine glycosylation occurs at N70. 11 helical membrane passes run 90–110, 117–137, 141–161, 178–198, 203–223, 286–306, 315–335, 345–365, 374–394, 408–428, and 435–455; these read LASSLFFAGLLIGNVFFGPLS, PVYLSGLFFDIIFGYFTALAP, VFAVSRFFVGVMNGGMALVSF, SLTNLIFAVGIAFYALLGFYI, TLAFVANSPGIFFLLLSFVLP, ILLMYIWYVCSLVYYGLTLNA, LNVALYGLVEVPAFPLCLYFI, ATAGFLVFAGFACIFTIFVPE, TVLALFGKLSVSAAFNVVYIY, LGVCAMACRFGGILSPFIPAM, and MPFVAFGISGISAGILSLLLP.

Belongs to the major facilitator (TC 2.A.1) superfamily. Organic cation transporter (TC 2.A.1.19) family.

It localises to the membrane. Probably transports organic cations. This Xenopus laevis (African clawed frog) protein is Solute carrier family 22 member 15-like (slc22a15b).